We begin with the raw amino-acid sequence, 255 residues long: CCAAT/enhancer-binding protein delta (255 aa).

Disordered regions lie at residues 1–42, 91–121, and 138–206; these read MTCA…AAPA, GGPA…PGSL, and PAAQ…QEMQ. Residue Lys-107 forms a Glycyl lysine isopeptide (Lys-Gly) (interchain with G-Cter in SUMO) linkage. Over residues 141–161 the composition is skewed to pro residues; it reads QPTPPASPDPPRRSPAPPAPG. The span at 163 to 187 shows a compositional bias: basic and acidic residues; that stretch reads ARDKAAGKRGPDRGSPEYRQRRERN. Positions 177 to 240 constitute a bZIP domain; that stretch reads SPEYRQRRER…AGLRRFFKQL (64 aa). Residues 181-208 are basic motif; the sequence is RQRRERNNIAVRKSRDKAKRRNQEMQQK. The interval 212 to 240 is leucine-zipper; it reads LSAENEKLQQRVEQLTRDLAGLRRFFKQL.

The protein belongs to the bZIP family. C/EBP subfamily. Binds DNA as a homodimer and as a heterodimer. Can form stable heterodimers with CEBPA, CEBPB and CEBPE. Directly interacts with SPI1/PU.1; this interaction does not affect DNA-binding properties of each partner. Interacts with PRDM16.

The protein localises to the nucleus. In terms of biological role, transcription activator that recognizes two different DNA motifs: the CCAAT homology common to many promoters and the enhanced core homology common to many enhancers. Important transcription factor regulating the expression of genes involved in immune and inflammatory responses. Transcriptional activator that enhances IL6 transcription alone and as heterodimer with CEBPB. In Ovis aries (Sheep), this protein is CCAAT/enhancer-binding protein delta (CEBPD).